The primary structure comprises 452 residues: Mitochondrial import inner membrane translocase subunit TIM50 (452 aa).

The transit peptide at 1 to 23 (MSLSKLTQTCFSRHQAKTFIRLY) directs the protein to the mitochondrion. The Mitochondrial matrix segment spans residues 24 to 167 (SSDFKSLLGP…RRKRMERNTR (144 aa)). Disordered stretches follow at residues 96 to 115 (IEAE…TSSA) and 130 to 153 (ESAA…GNAE). Positions 131–144 (SAASKSSSSSGGSS) are enriched in low complexity. A helical transmembrane segment spans residues 168-188 (IGAYVLFGGSIIGFISFCFYY). The Mitochondrial intermembrane segment spans residues 189–452 (GRAQRDEFGN…LFGSRRHVNA (264 aa)). In terms of domain architecture, FCP1 homology spans 243-387 (YLQPKYTIVI…VDLAELLKTI (145 aa)).

It belongs to the TIM50 family.

Its subcellular location is the mitochondrion inner membrane. Essential component of the TIM23 complex, a complex that mediates the translocation of transit peptide-containing proteins across the mitochondrial inner membrane. In Caenorhabditis elegans, this protein is Mitochondrial import inner membrane translocase subunit TIM50 (scpl-4).